A 176-amino-acid chain; its full sequence is Ribosome maturation factor RimM (176 aa).

One can recognise a PRC barrel domain in the interval 100 to 173 (PGEFHLLDLL…WLMVCPPPGL (74 aa)).

Belongs to the RimM family. As to quaternary structure, binds ribosomal protein uS19.

The protein resides in the cytoplasm. Its function is as follows. An accessory protein needed during the final step in the assembly of 30S ribosomal subunit, possibly for assembly of the head region. Essential for efficient processing of 16S rRNA. May be needed both before and after RbfA during the maturation of 16S rRNA. It has affinity for free ribosomal 30S subunits but not for 70S ribosomes. This Prochlorococcus marinus (strain SARG / CCMP1375 / SS120) protein is Ribosome maturation factor RimM.